A 257-amino-acid polypeptide reads, in one-letter code: uncharacterized protein (257 aa).

The N-terminal stretch at 1-22 is a signal peptide; the sequence is MIHSRKLRLWLYLVLLAVFIGA. Cys23 is lipidated: N-palmitoyl cysteine. Cys23 carries S-diacylglycerol cysteine lipidation.

This sequence belongs to the staphylococcal tandem lipoprotein family.

It is found in the cell membrane. This is an uncharacterized protein from Staphylococcus aureus (strain Mu50 / ATCC 700699).